The chain runs to 183 residues: Small ribosomal subunit protein uS4c (183 aa).

Residues 82-143 form the S4 RNA-binding domain; that stretch reads MRLDNILFRL…KQRSKALIQN (62 aa).

Belongs to the universal ribosomal protein uS4 family. As to quaternary structure, part of the 30S ribosomal subunit. Contacts protein S5. The interaction surface between S4 and S5 is involved in control of translational fidelity.

It localises to the plastid. Its subcellular location is the chloroplast. Functionally, one of the primary rRNA binding proteins, it binds directly to 16S rRNA where it nucleates assembly of the body of the 30S subunit. In terms of biological role, with S5 and S12 plays an important role in translational accuracy. This chain is Small ribosomal subunit protein uS4c (rps4), found in Gladiolus communis (Cornflag).